We begin with the raw amino-acid sequence, 85 residues long: Sec-independent protein translocase protein TatA (85 aa).

The chain crosses the membrane as a helical span at residues 1–21; it reads MGGISIWQLLIIALIVVLLFG. A disordered region spans residues 43–85; sequence MSSDEDKKALEDAEAAKSVQTAQTAQPTQQATEKKPESNKEQA. The span at 46–57 shows a compositional bias: basic and acidic residues; that stretch reads DEDKKALEDAEA. Over residues 58–73 the composition is skewed to low complexity; the sequence is AKSVQTAQTAQPTQQA. The segment covering 74–85 has biased composition (basic and acidic residues); it reads TEKKPESNKEQA.

Belongs to the TatA/E family. In terms of assembly, the Tat system comprises two distinct complexes: a TatABC complex, containing multiple copies of TatA, TatB and TatC subunits, and a separate TatA complex, containing only TatA subunits. Substrates initially bind to the TatABC complex, which probably triggers association of the separate TatA complex to form the active translocon.

It localises to the cell inner membrane. Functionally, part of the twin-arginine translocation (Tat) system that transports large folded proteins containing a characteristic twin-arginine motif in their signal peptide across membranes. TatA could form the protein-conducting channel of the Tat system. The polypeptide is Sec-independent protein translocase protein TatA (Shewanella sp. (strain ANA-3)).